A 61-amino-acid chain; its full sequence is Large ribosomal subunit protein bL32 (61 aa).

Over residues 1–16 the composition is skewed to basic residues; sequence MAVPKKKTSKSRKNMR. Residues 1–20 are disordered; it reads MAVPKKKTSKSRKNMRRAHD.

It belongs to the bacterial ribosomal protein bL32 family.

The chain is Large ribosomal subunit protein bL32 from Trichlorobacter lovleyi (strain ATCC BAA-1151 / DSM 17278 / SZ) (Geobacter lovleyi).